Consider the following 660-residue polypeptide: Arginine--tRNA ligase, cytoplasmic (660 aa).

Met1 carries the post-translational modification N-acetylmethionine. Positions Met1–Thr72 are could be involved in the assembly of the multisynthetase complex. L-arginine-binding positions include Ser200 to Asn202, His211, Tyr384, Asp388, and Gln412. The short motif at Pro201–Leu212 is the 'HIGH' region element. The interval Asn529–Ser543 is interaction with tRNA.

It belongs to the class-I aminoacyl-tRNA synthetase family. As to quaternary structure, interacts (via N-terminus) with AIMP1 (via N-terminus); this stimulates its catalytic activity. Interacts (via N-terminus) with LARS2 (via C-terminus). Monomer. Part of a multisubunit complex that groups tRNA ligases for Arg (RARS1), Asp (DARS1), Gln (QARS1), Ile (IARS1), Leu (LARS1), Lys (KARS1), Met (MARS1) the bifunctional ligase for Glu and Pro (EPRS1) and the auxiliary subunits AIMP1/p43, AIMP2/p38 and EEF1E1/p18. Interacts with QARS1. Part of a complex composed of RARS1, QARS1 and AIMP1.

The protein resides in the cytoplasm. The protein localises to the cytosol. It carries out the reaction tRNA(Arg) + L-arginine + ATP = L-arginyl-tRNA(Arg) + AMP + diphosphate. Forms part of a macromolecular complex that catalyzes the attachment of specific amino acids to cognate tRNAs during protein synthesis. Modulates the secretion of AIMP1 and may be involved in generation of the inflammatory cytokine EMAP2 from AIMP1. This chain is Arginine--tRNA ligase, cytoplasmic (RARS1), found in Bos taurus (Bovine).